A 550-amino-acid chain; its full sequence is Glutamyl-tRNA(Gln) amidotransferase subunit A, mitochondrial (550 aa).

Catalysis depends on charge relay system residues Lys79 and Ser171. Ser195 (acyl-ester intermediate) is an active-site residue. The tract at residues 371-390 is disordered; the sequence is EKDENKVDNDNDDDDDVDEN.

Belongs to the amidase family. GatA subfamily. Subunit of the heterotrimeric GatCAB amidotransferase (AdT) complex, composed of A, B and C subunits.

The protein localises to the mitochondrion. The enzyme catalyses L-glutamyl-tRNA(Gln) + L-glutamine + ATP + H2O = L-glutaminyl-tRNA(Gln) + L-glutamate + ADP + phosphate + H(+). Functionally, allows the formation of correctly charged Gln-tRNA(Gln) through the transamidation of misacylated Glu-tRNA(Gln) in the mitochondria. The reaction takes place in the presence of glutamine and ATP through an activated gamma-phospho-Glu-tRNA(Gln). This is Glutamyl-tRNA(Gln) amidotransferase subunit A, mitochondrial from Dictyostelium discoideum (Social amoeba).